The sequence spans 324 residues: Biotin synthase (324 aa).

Residues 42–269 form the Radical SAM core domain; the sequence is NEVQISSLLN…KSYIRLAAGR (228 aa). [4Fe-4S] cluster contacts are provided by Cys57, Cys61, and Cys64. The [2Fe-2S] cluster site is built by Cys101, Cys132, Cys192, and Arg264.

The protein belongs to the radical SAM superfamily. Biotin synthase family. In terms of assembly, homodimer. The cofactor is [4Fe-4S] cluster. [2Fe-2S] cluster is required as a cofactor.

It carries out the reaction (4R,5S)-dethiobiotin + (sulfur carrier)-SH + 2 reduced [2Fe-2S]-[ferredoxin] + 2 S-adenosyl-L-methionine = (sulfur carrier)-H + biotin + 2 5'-deoxyadenosine + 2 L-methionine + 2 oxidized [2Fe-2S]-[ferredoxin]. It functions in the pathway cofactor biosynthesis; biotin biosynthesis; biotin from 7,8-diaminononanoate: step 2/2. In terms of biological role, catalyzes the conversion of dethiobiotin (DTB) to biotin by the insertion of a sulfur atom into dethiobiotin via a radical-based mechanism. The chain is Biotin synthase from Ehrlichia canis (strain Jake).